The chain runs to 532 residues: Phosphoenolpyruvate carboxykinase (ATP) (532 aa).

Arginine 60, tyrosine 194, and lysine 200 together coordinate substrate. ATP is bound by residues lysine 200, histidine 219, and 237-245 (GLSGTGKTT). Mn(2+) is bound by residues lysine 200 and histidine 219. Aspartate 258 contacts Mn(2+). ATP-binding residues include glutamate 286, arginine 324, and threonine 449. Arginine 324 is a binding site for substrate.

Belongs to the phosphoenolpyruvate carboxykinase (ATP) family. It depends on Mn(2+) as a cofactor.

It is found in the cytoplasm. It carries out the reaction oxaloacetate + ATP = phosphoenolpyruvate + ADP + CO2. Its pathway is carbohydrate biosynthesis; gluconeogenesis. Involved in the gluconeogenesis. Catalyzes the conversion of oxaloacetate (OAA) to phosphoenolpyruvate (PEP) through direct phosphoryl transfer between the nucleoside triphosphate and OAA. The sequence is that of Phosphoenolpyruvate carboxykinase (ATP) from Paracoccus denitrificans (strain Pd 1222).